We begin with the raw amino-acid sequence, 1294 residues long: Phosphoribosylformylglycinamidine synthase (1294 aa).

The interval 303-325 (WPGAATGSGGEIRDEGATGRGSK) is disordered. ATP-binding positions include 305 to 316 (GAATGSGGEIRD), 384 to 386 (TGY), and A676. Residues D677, E716, N720, and D883 each coordinate Mg(2+). Residue S885 coordinates ATP. The 254-residue stretch at 1041–1294 (VAVLREQGVN…MFRNARRQLG (254 aa)) folds into the Glutamine amidotransferase type-1 domain. C1134 acts as the Nucleophile in catalysis. Active-site residues include H1259 and E1261.

In the N-terminal section; belongs to the FGAMS family. Monomer.

It localises to the cytoplasm. The enzyme catalyses N(2)-formyl-N(1)-(5-phospho-beta-D-ribosyl)glycinamide + L-glutamine + ATP + H2O = 2-formamido-N(1)-(5-O-phospho-beta-D-ribosyl)acetamidine + L-glutamate + ADP + phosphate + H(+). It functions in the pathway purine metabolism; IMP biosynthesis via de novo pathway; 5-amino-1-(5-phospho-D-ribosyl)imidazole from N(2)-formyl-N(1)-(5-phospho-D-ribosyl)glycinamide: step 1/2. Phosphoribosylformylglycinamidine synthase involved in the purines biosynthetic pathway. Catalyzes the ATP-dependent conversion of formylglycinamide ribonucleotide (FGAR) and glutamine to yield formylglycinamidine ribonucleotide (FGAM) and glutamate. This Pectobacterium atrosepticum (strain SCRI 1043 / ATCC BAA-672) (Erwinia carotovora subsp. atroseptica) protein is Phosphoribosylformylglycinamidine synthase.